The following is a 324-amino-acid chain: Protoheme IX farnesyltransferase (324 aa).

9 helical membrane passes run 31–51 (LIVL…RGEV), 53–73 (PVLA…ANTI), 104–124 (LVFA…CANL), 125–145 (LSAC…THWL), 153–173 (IVIG…AVTG), 181–201 (VLFA…AMLI), 222–242 (TAWQ…LLVY), 243–263 (PLHA…VVFI), and 285–305 (FSIL…LPLT).

It belongs to the UbiA prenyltransferase family. Protoheme IX farnesyltransferase subfamily.

The protein resides in the cell inner membrane. The enzyme catalyses heme b + (2E,6E)-farnesyl diphosphate + H2O = Fe(II)-heme o + diphosphate. It functions in the pathway porphyrin-containing compound metabolism; heme O biosynthesis; heme O from protoheme: step 1/1. Its function is as follows. Converts heme B (protoheme IX) to heme O by substitution of the vinyl group on carbon 2 of heme B porphyrin ring with a hydroxyethyl farnesyl side group. In Cyanothece sp. (strain PCC 7425 / ATCC 29141), this protein is Protoheme IX farnesyltransferase.